We begin with the raw amino-acid sequence, 552 residues long: Segmentation polarity homeobox protein engrailed (552 aa).

Positions Ser-93–Thr-108 are enriched in low complexity. Disordered regions lie at residues Ser-93–Ile-112, Thr-130–Pro-171, Pro-309–Asn-419, and Asp-433–Ala-460. Acidic residues predominate over residues Glu-135 to Asp-151. Low complexity predominate over residues Pro-317–Pro-382. Residues Gln-446 to Pro-457 show a composition bias toward basic and acidic residues. A DNA-binding region (homeobox) is located at residues Glu-454–Thr-513.

The protein belongs to the engrailed homeobox family. Phosphorylated. Phosphorylation may directly or allosterically modify its function.

It is found in the nucleus. Functionally, this protein specifies the body segmentation pattern. It is required for the development of the central nervous system. Transcriptional regulator that represses activated promoters. Wg signaling operates by inactivating the SGG repression of EN autoactivation. This is Segmentation polarity homeobox protein engrailed (en) from Drosophila melanogaster (Fruit fly).